The primary structure comprises 458 residues: Phosphoglucosamine mutase (458 aa).

S102 functions as the Phosphoserine intermediate in the catalytic mechanism. Mg(2+) is bound by residues S102, D252, D254, and D256. S102 bears the Phosphoserine mark.

The protein belongs to the phosphohexose mutase family. It depends on Mg(2+) as a cofactor. In terms of processing, activated by phosphorylation.

It catalyses the reaction alpha-D-glucosamine 1-phosphate = D-glucosamine 6-phosphate. Catalyzes the conversion of glucosamine-6-phosphate to glucosamine-1-phosphate. The sequence is that of Phosphoglucosamine mutase from Anaeromyxobacter dehalogenans (strain 2CP-C).